We begin with the raw amino-acid sequence, 342 residues long: Tryptophan--tRNA ligase (342 aa).

ATP is bound by residues 19–21 and 27–28; these read QPS and GN. Positions 20–28 match the 'HIGH' region motif; that stretch reads PSGELTIGN. Aspartate 143 provides a ligand contact to L-tryptophan. ATP is bound by residues 155-157, valine 194, and 203-207; these read GED and KMSKS. Positions 203-207 match the 'KMSKS' region motif; sequence KMSKS.

This sequence belongs to the class-I aminoacyl-tRNA synthetase family. In terms of assembly, homodimer.

Its subcellular location is the cytoplasm. The catalysed reaction is tRNA(Trp) + L-tryptophan + ATP = L-tryptophyl-tRNA(Trp) + AMP + diphosphate + H(+). Functionally, catalyzes the attachment of tryptophan to tRNA(Trp). The protein is Tryptophan--tRNA ligase of Yersinia pestis.